The following is a 245-amino-acid chain: Eukaryotic translation initiation factor 6 (245 aa).

A Phosphotyrosine modification is found at Tyr-113. Thr-165 carries the post-translational modification Phosphothreonine. The residue at position 166 (Ser-166) is a Phosphoserine. Phosphoserine; by CK1 occurs at positions 174 and 175. Ser-235 is modified (phosphoserine; by PKC). A phosphoserine mark is found at Ser-239 and Ser-243.

The protein belongs to the eIF-6 family. As to quaternary structure, monomer. Associates with the 60S ribosomal subunit. Interacts with RACK1. Interacts with DICER1, AGO2, TARBP2, MOV10 and RPL7A; they form a large RNA-induced silencing complex (RISC). Phosphorylation at Ser-174 and Ser-175 by CSNK1D/CK1 promotes nuclear export. Post-translationally, ufmylated by UFL1. Expressed at very high levels in colon carcinoma with lower levels in normal colon and ileum and lowest levels in kidney and muscle (at protein level).

It is found in the cytoplasm. The protein localises to the nucleus. The protein resides in the nucleolus. Binds to the 60S ribosomal subunit and prevents its association with the 40S ribosomal subunit to form the 80S initiation complex in the cytoplasm. Behaves as a stimulatory translation initiation factor downstream insulin/growth factors. Is also involved in ribosome biogenesis. Associates with pre-60S subunits in the nucleus and is involved in its nuclear export. Cytoplasmic release of TIF6 from 60S subunits and nuclear relocalization is promoted by a RACK1 (RACK1)-dependent protein kinase C activity. In tissues responsive to insulin, controls fatty acid synthesis and glycolysis by exerting translational control of adipogenic transcription factors such as CEBPB, CEBPD and ATF4 that have G/C rich or uORF in their 5'UTR. Required for ROS-dependent megakaryocyte maturation and platelets formation, controls the expression of mitochondrial respiratory chain genes involved in reactive oxygen species (ROS) synthesis. Involved in miRNA-mediated gene silencing by the RNA-induced silencing complex (RISC). Required for both miRNA-mediated translational repression and miRNA-mediated cleavage of complementary mRNAs by RISC. Modulates cell cycle progression and global translation of pre-B cells, its activation seems to be rate-limiting in tumorigenesis and tumor growth. The sequence is that of Eukaryotic translation initiation factor 6 from Homo sapiens (Human).